The sequence spans 386 residues: Latent membrane protein 1 (386 aa).

Residues 1 to 23 (MEHDLERGPPGPRRPPRGPPLSS) are Cytoplasmic-facing. The chain crosses the membrane as a helical span at residues 24–44 (SLGLALLLLLLALLFWLYIVM). At 45–51 (SDWTGGA) the chain is on the extracellular side. The chain crosses the membrane as a helical span at residues 52 to 72 (LLVLYSFALMLIIIILIIFIF). Topologically, residues 73–75 (RRD) are cytoplasmic. The chain crosses the membrane as a helical span at residues 76-96 (LLCPLGALCILLLMITLLLIA). Residues 97-106 (LWNLHGQALF) lie on the Extracellular side of the membrane. Residues 107 to 127 (LGIVLFIFGCLLVLGIWIYLL) form a helical membrane-spanning segment. Topologically, residues 128-139 (EMLWRLGATIWQ) are cytoplasmic. Residues 140–160 (LLAFFLAFFLDLILLIIALYL) form a helical membrane-spanning segment. Over 161–163 (QQN) the chain is Extracellular. The chain crosses the membrane as a helical span at residues 164 to 184 (WWTLLVDLLWLLLFLAILIWM). Over 185 to 386 (YYHGQRHSDE…HGPVQLSYYD (202 aa)) the chain is Cytoplasmic. The CTAR1 stretch occupies residues 194 to 232 (EHHHDDSLPHPQQATDDSGHESDSNSNEGRHHLLVSGAG). The tract at residues 194 to 386 (EHHHDDSLPH…HGPVQLSYYD (193 aa)) is disordered. Positions 204-208 (PQQAT) match the Interaction with host TRAF proteins motif. Over residues 210-224 (DSGHESDSNSNEGRH) the composition is skewed to basic and acidic residues. A compositionally biased stretch (low complexity) spans 251–267 (NGPQDPDNTDDNGPQDP). Residues 351–386 (GHGGGDPHLPTLLLGSSGSGGDDDDPHGPVQLSYYD) are CTAR2.

The protein belongs to the herpesviridae LMP-1 family. Interacts (via PXQXT motif) with host tumor necrosis factor receptor-associated factor (TRAF) proteins TRAF1, TRAF2, TRAF3 and TRAF5. Interacts with human protein ZMYND11; leading to negatively regulate NF-kappa-B activation. Interacts with host UBE2I; this interaction induces the sumoylation of various cellular proteins. Interacts with host IRF7. Interacts with host TYK2. Ubiquitinated on the N-terminus.

Its subcellular location is the host cell membrane. Acts as a CD40 functional homolog to prevent apoptosis of infected B-lymphocytes and drive their proliferation. Functions as a constitutively active tumor necrosis factor receptor that induces the activation of several signaling pathways, including those of the NF-kappa-B family. LMP1 signaling leads to up-regulation of antiapoptotic proteins and provide growth signals in latently infected cells. Interacts with host UBE2I and subsequently affects the sumoylation state of several cellular proteins. For example, induces the sumoylation of host IRF7 thereby limiting its transcriptional activity and modulating the activation of innate immune responses. Also inhibits host IFN-alpha-stimulated STAT2 nuclear translocation and interferon-stimulated response element transcriptional activity by interacting with and inhibiting host TYK2. Induces SUMO expression during viral latency thereby dysregulating the host sumoylation processes. The polypeptide is Latent membrane protein 1 (LMP1) (Epstein-Barr virus (strain B95-8) (HHV-4)).